A 292-amino-acid polypeptide reads, in one-letter code: Elongation factor Ts (292 aa).

Residues 79–82 (TDFV) are involved in Mg(2+) ion dislocation from EF-Tu.

The protein belongs to the EF-Ts family.

It localises to the cytoplasm. Associates with the EF-Tu.GDP complex and induces the exchange of GDP to GTP. It remains bound to the aminoacyl-tRNA.EF-Tu.GTP complex up to the GTP hydrolysis stage on the ribosome. This is Elongation factor Ts from Malacoplasma penetrans (strain HF-2) (Mycoplasma penetrans).